Consider the following 231-residue polypeptide: Ribosomal RNA small subunit methyltransferase G (231 aa).

S-adenosyl-L-methionine is bound by residues Gly85, Phe90, and Arg154.

It belongs to the methyltransferase superfamily. RNA methyltransferase RsmG family.

It is found in the cytoplasm. The enzyme catalyses guanosine(527) in 16S rRNA + S-adenosyl-L-methionine = N(7)-methylguanosine(527) in 16S rRNA + S-adenosyl-L-homocysteine. Its function is as follows. Specifically methylates the N7 position of guanine in position 527 of 16S rRNA. The protein is Ribosomal RNA small subunit methyltransferase G of Rhodopseudomonas palustris (strain BisA53).